The primary structure comprises 326 residues: Negative regulator of the PHO system (326 aa).

One can recognise a Protein kinase domain in the interval 8-290; it reads FQQLEKLGEG…ARQALQHPWF (283 aa). ATP is bound by residues 14–22 and Lys37; that span reads LGEGTYATV. Asp131 serves as the catalytic Proton acceptor. Residues 300–326 are disordered; it reads PQHLSDPYQQQQQQQQHPHQPIIDQQY. Over residues 305–326 the composition is skewed to low complexity; the sequence is DPYQQQQQQQQHPHQPIIDQQY.

It belongs to the protein kinase superfamily. CMGC Ser/Thr protein kinase family. CDC2/CDKX subfamily. In terms of assembly, interacts with a number of cyclins.

It carries out the reaction L-seryl-[protein] + ATP = O-phospho-L-seryl-[protein] + ADP + H(+). The enzyme catalyses L-threonyl-[protein] + ATP = O-phospho-L-threonyl-[protein] + ADP + H(+). Functionally, when phosphate concentrations are high it phosphorylates the PHO4 transcription factor thus establishing repression. This Candida albicans (Yeast) protein is Negative regulator of the PHO system (PHO85).